The sequence spans 85 residues: Large ribosomal subunit protein bL27 (85 aa).

Positions 1–21 are disordered; that stretch reads MAHKKAGGSTRNGRDSESKRL.

Belongs to the bacterial ribosomal protein bL27 family.

This Ectopseudomonas mendocina (strain ymp) (Pseudomonas mendocina) protein is Large ribosomal subunit protein bL27.